A 147-amino-acid chain; its full sequence is Large ribosomal subunit protein uL15 (147 aa).

The segment covering 1 to 28 (MIRRRKKVRKLRGSHTHGWGCKKKHRGG) has biased composition (basic residues). Positions 1 to 43 (MIRRRKKVRKLRGSHTHGWGCKKKHRGGGSKGGRGMAGTGKRN) are disordered. Gly residues predominate over residues 29–38 (GSKGGRGMAG).

It belongs to the universal ribosomal protein uL15 family. In terms of assembly, part of the 50S ribosomal subunit.

Its function is as follows. Binds to the 23S rRNA. This chain is Large ribosomal subunit protein uL15, found in Pyrococcus horikoshii (strain ATCC 700860 / DSM 12428 / JCM 9974 / NBRC 100139 / OT-3).